The chain runs to 460 residues: V-type ATP synthase beta chain (460 aa).

Belongs to the ATPase alpha/beta chains family.

Its function is as follows. Produces ATP from ADP in the presence of a proton gradient across the membrane. The V-type beta chain is a regulatory subunit. This is V-type ATP synthase beta chain from Thermotoga neapolitana (strain ATCC 49049 / DSM 4359 / NBRC 107923 / NS-E).